Consider the following 284-residue polypeptide: Bifunctional protein FolD (284 aa).

NADP(+) contacts are provided by residues glycine 165–serine 167 and serine 190.

Belongs to the tetrahydrofolate dehydrogenase/cyclohydrolase family. In terms of assembly, homodimer.

The catalysed reaction is (6R)-5,10-methylene-5,6,7,8-tetrahydrofolate + NADP(+) = (6R)-5,10-methenyltetrahydrofolate + NADPH. The enzyme catalyses (6R)-5,10-methenyltetrahydrofolate + H2O = (6R)-10-formyltetrahydrofolate + H(+). Its pathway is one-carbon metabolism; tetrahydrofolate interconversion. In terms of biological role, catalyzes the oxidation of 5,10-methylenetetrahydrofolate to 5,10-methenyltetrahydrofolate and then the hydrolysis of 5,10-methenyltetrahydrofolate to 10-formyltetrahydrofolate. This Streptococcus gordonii (strain Challis / ATCC 35105 / BCRC 15272 / CH1 / DL1 / V288) protein is Bifunctional protein FolD.